The sequence spans 568 residues: Adenine deaminase (568 aa).

Belongs to the metallo-dependent hydrolases superfamily. Adenine deaminase family. Mn(2+) serves as cofactor.

The catalysed reaction is adenine + H2O + H(+) = hypoxanthine + NH4(+). The polypeptide is Adenine deaminase (Clostridium perfringens (strain ATCC 13124 / DSM 756 / JCM 1290 / NCIMB 6125 / NCTC 8237 / Type A)).